A 310-amino-acid polypeptide reads, in one-letter code: MNGLSVSELCCLFCCPPCPGRIAAKLAFLPPDPTYSLVPEPEPGPGGAGAAPSGPLRTSAATPGRWKIHLTERADFQYGQRELDTIEVFVTKSARANRIACMYVRCVPGARYTVLFSHGNAVDLGQMCSFYVGLGTRIGCNIFSYDYSGYGISSGRPSEKNLYADIDAAWQALRTRYGISPDSIILYGQSIGTVPTVDLASRYECAAVVLHSPLTSGMRVAFPDTKKTYCFDAFPNIEKVSKITSPVLIIHGTEDEVIDFSHGLALYERCPKAVEPLWVEGAGHNDIELYSQYLERLRRFISQELPSQRA.

Residues 38 to 61 form a disordered region; sequence VPEPEPGPGGAGAAPSGPLRTSAA. Active-site charge relay system residues include Ser-190, Asp-255, and His-284. At Ser-307 the chain carries Phosphoserine.

This sequence belongs to the AB hydrolase superfamily. ABHD17 family. Palmitoylated on cysteine residues located in a cysteine cluster at the N-terminus which promotes membrane localization. Palmitoylation is required for post-synaptic localization and for depalmitoylating activity towards DLG4/PSD95.

It localises to the cell membrane. It is found in the endosome membrane. The protein resides in the cell projection. Its subcellular location is the dendritic spine. The protein localises to the postsynaptic density membrane. It catalyses the reaction S-hexadecanoyl-L-cysteinyl-[protein] + H2O = L-cysteinyl-[protein] + hexadecanoate + H(+). In terms of biological role, hydrolyzes fatty acids from S-acylated cysteine residues in proteins. Has depalmitoylating activity towards NRAS. Has depalmitoylating activity towards DLG4/PSD95. May have depalmitoylating activity towars MAP6. The sequence is that of Alpha/beta hydrolase domain-containing protein 17A from Mus musculus (Mouse).